A 373-amino-acid polypeptide reads, in one-letter code: 8-amino-7-oxononanoate synthase (373 aa).

Substrate is bound at residue Arg16. 93–94 (GF) is a binding site for pyridoxal 5'-phosphate. His118 provides a ligand contact to substrate. Pyridoxal 5'-phosphate is bound by residues Ser165, 190–193 (DEAH), and 222–225 (TFSK). At Lys225 the chain carries N6-(pyridoxal phosphate)lysine. Position 334 (Thr334) interacts with substrate.

This sequence belongs to the class-II pyridoxal-phosphate-dependent aminotransferase family. BioF subfamily. In terms of assembly, homodimer. Requires pyridoxal 5'-phosphate as cofactor.

The enzyme catalyses 6-carboxyhexanoyl-[ACP] + L-alanine + H(+) = (8S)-8-amino-7-oxononanoate + holo-[ACP] + CO2. It functions in the pathway cofactor biosynthesis; biotin biosynthesis. Catalyzes the decarboxylative condensation of pimeloyl-[acyl-carrier protein] and L-alanine to produce 8-amino-7-oxononanoate (AON), [acyl-carrier protein], and carbon dioxide. The sequence is that of 8-amino-7-oxononanoate synthase from Helicobacter pylori (strain ATCC 700392 / 26695) (Campylobacter pylori).